The following is a 320-amino-acid chain: Iminosuccinate reductase (320 aa).

The Proton donor/acceptor role is filled by Lys-67. Residues Arg-110, 137–138, Asn-159, Ser-199, 219–222, Lys-226, and Gly-291 each bind NAD(+); these read HQ and MGTD.

It belongs to the ornithine cyclodeaminase/mu-crystallin family. BhcD subfamily.

It catalyses the reaction L-aspartate + NAD(+) = iminosuccinate + NADH + H(+). Imine reductase that catalyzes the NADH-dependent reduction of iminosuccinate to L-aspartate. Is essential for the growth of P.denitrificans in the presence of glycolate and glyoxylate since it functions in glyoxylate assimilation via the beta-hydroxyaspartate cycle (BHAC). Thereby BhcD regenerates the amino group donor for the first step of the BHAC. This Paracoccus denitrificans (strain Pd 1222) protein is Iminosuccinate reductase.